The chain runs to 316 residues: 4-hydroxyphenylacetate decarboxylase activating enzyme (316 aa).

The Radical SAM core domain occupies 20–307 (HDGPGCRTTV…QDIFLDNGIA (288 aa)). [4Fe-4S] cluster is bound by residues C34, C38, C41, C60, C66, C69, and C105. 40–42 (WCA) contacts S-adenosyl-L-methionine. Positions 84 to 115 (NKPVIDWNICKDCESFECVNSCYYNAFKLCAK) constitute a 4Fe-4S ferredoxin-type domain. Residues G144, 193–195 (DIK), and H267 each bind S-adenosyl-L-methionine.

It belongs to the organic radical-activating enzymes family. As to quaternary structure, monomer. The cofactor is [4Fe-4S] cluster.

The enzyme catalyses glycyl-[protein] + reduced [flavodoxin] + S-adenosyl-L-methionine = glycin-2-yl radical-[protein] + semiquinone [flavodoxin] + 5'-deoxyadenosine + L-methionine + H(+). In terms of biological role, catalyzes activation of 4-hydroxyphenylacetate decarboxylase under anaerobic conditions by generation of an organic free radical on a glycine residue, via a homolytic cleavage of S-adenosyl-L-methionine (SAM). This is 4-hydroxyphenylacetate decarboxylase activating enzyme from Clostridioides difficile (Peptoclostridium difficile).